The sequence spans 354 residues: Gibberellin receptor GID1 (354 aa).

An Involved in the stabilization of the negatively charged intermediate by the formation of the oxyanion hole motif is present at residues 120–122 (HGG). Gibberellin A3 contacts are provided by residues 122–123 (GS), tyrosine 134, serine 198, and aspartate 250. Residues 122–123 (GS), tyrosine 134, and serine 198 contribute to the gibberellin A4 site. Residue serine 198 is part of the active site. Aspartate 296 is a catalytic residue. Residue glycine 327 coordinates gibberellin A3. Position 327 (glycine 327) interacts with gibberellin A4.

It belongs to the 'GDXG' lipolytic enzyme family. In terms of assembly, interacts with the DELLA protein SLR1 in a GA-dependent manner, resulting in subsequent SLR1 degradation.

It is found in the nucleus. Functionally, functions as a soluble gibberellin (GA) receptor. GA is an essential hormone that regulates growth and development in plants. Binds with high affinity the biologically active GAs such as GA1, GA3 and GA4, but has low or no affinity for the biologically inactive GAs. Upon GA-binding, it interacts with the DELLA protein SLR1, a repressor of GA signaling. This leads to SLR1 degradation by the proteasome, allowing the GA signaling pathway. This is Gibberellin receptor GID1 from Oryza sativa subsp. japonica (Rice).